The following is a 489-amino-acid chain: Betaine aldehyde dehydrogenase (489 aa).

Residues Thr-26 and Asp-93 each contribute to the K(+) site. 150 to 152 (GAW) contributes to the NAD(+) binding site. Lys-162 (charge relay system) is an active-site residue. NAD(+) is bound at residue 176–179 (KPSE). Residue Val-180 participates in K(+) binding. Residue 229 to 232 (GVET) coordinates NAD(+). Leu-245 is a K(+) binding site. Residue Glu-251 is the Proton acceptor of the active site. The NAD(+) site is built by Gly-253, Cys-285, and Glu-386. Cys-285 serves as the catalytic Nucleophile. Cys-285 carries the cysteine sulfenic acid (-SOH) modification. The K(+) site is built by Lys-456 and Gly-459. Glu-463 serves as the catalytic Charge relay system.

The protein belongs to the aldehyde dehydrogenase family. Dimer of dimers. It depends on K(+) as a cofactor.

It catalyses the reaction betaine aldehyde + NAD(+) + H2O = glycine betaine + NADH + 2 H(+). The protein operates within amine and polyamine biosynthesis; betaine biosynthesis via choline pathway; betaine from betaine aldehyde: step 1/1. Functionally, involved in the biosynthesis of the osmoprotectant glycine betaine. Catalyzes the irreversible oxidation of betaine aldehyde to the corresponding acid. The sequence is that of Betaine aldehyde dehydrogenase from Burkholderia orbicola (strain AU 1054).